Here is a 70-residue protein sequence, read N- to C-terminus: Protein SlyX homolog (70 aa).

Residues 51–70 are disordered; that stretch reads RMREAEANRPGPTNEPPPHY.

Belongs to the SlyX family.

The polypeptide is Protein SlyX homolog (Nitrobacter hamburgensis (strain DSM 10229 / NCIMB 13809 / X14)).